A 195-amino-acid chain; its full sequence is Imidazoleglycerol-phosphate dehydratase (195 aa).

The protein belongs to the imidazoleglycerol-phosphate dehydratase family.

It localises to the cytoplasm. It carries out the reaction D-erythro-1-(imidazol-4-yl)glycerol 3-phosphate = 3-(imidazol-4-yl)-2-oxopropyl phosphate + H2O. It functions in the pathway amino-acid biosynthesis; L-histidine biosynthesis; L-histidine from 5-phospho-alpha-D-ribose 1-diphosphate: step 6/9. The sequence is that of Imidazoleglycerol-phosphate dehydratase from Paraburkholderia xenovorans (strain LB400).